A 365-amino-acid chain; its full sequence is tRNA-specific 2-thiouridylase MnmA (365 aa).

Residues 14-21 (AMSGGVDS) and L40 contribute to the ATP site. C108 (nucleophile) is an active-site residue. A disulfide bridge links C108 with C204. Residue G132 coordinates ATP. The interaction with tRNA stretch occupies residues 154–156 (KDQ). C204 acts as the Cysteine persulfide intermediate in catalysis.

It belongs to the MnmA/TRMU family.

The protein localises to the cytoplasm. The enzyme catalyses S-sulfanyl-L-cysteinyl-[protein] + uridine(34) in tRNA + AH2 + ATP = 2-thiouridine(34) in tRNA + L-cysteinyl-[protein] + A + AMP + diphosphate + H(+). In terms of biological role, catalyzes the 2-thiolation of uridine at the wobble position (U34) of tRNA, leading to the formation of s(2)U34. The polypeptide is tRNA-specific 2-thiouridylase MnmA (Rickettsia akari (strain Hartford)).